Here is a 492-residue protein sequence, read N- to C-terminus: MNLVLPDVSLAPMLPVLLVLVGAIVSTLGGFWLPRRTLTALNILFVLASGASLVWLWGGAPWAAGMDVPRSAFAGALRADPAALLLGGTVLLGALLTLLVSLDTAYRARVSFAEFDALLMYAVTGCLLIAFSGDLIVMLIGLEIMSLASYVLATLQDSRRSQEAGLKYFLLGSVGSAILIYGLAFLYGATGTLNYAGIAQQVSALDPQNIGILVTGTLLVLSGFGVKIALVPFHQWTPDVYSGAPTLVSLFLSTVVKVAAFAGMLRVFGGALAAGPGWHSVLQILVALTLVIGNAAALYQQNFKRLLAYSAVAHTGFLAMTLLGDTAQGGAALGYYLLVYTLMTVGALAVVAALQRTEEGLTINDMRGLYYRHPAYAVALAFCLASLAGLPPFAGFFAKYLAIQVAFQAGYLLISVLAVLSSVAALVYYLRPAMLMFMPDRTPAREYAHGQRPATNVAVALSLIGIVVLGLLPNLWYGWVASPEIWRLLAGT.

Helical transmembrane passes span Met-13–Leu-33, Ile-43–Ala-63, Ala-82–Leu-102, Val-110–Ser-132, Ile-136–Leu-155, Phe-169–Ala-189, Ile-210–Leu-230, Pro-245–Leu-265, Leu-272–Ile-292, Leu-306–Thr-326, Ala-331–Val-351, Ala-377–Phe-397, Gly-410–Leu-430, and Val-457–Tyr-477.

This sequence belongs to the complex I subunit 2 family. NDH-1 is composed of 15 different subunits. Subunits NuoA, H, J, K, L, M, N constitute the membrane sector of the complex.

It localises to the cell membrane. It carries out the reaction a quinone + NADH + 5 H(+)(in) = a quinol + NAD(+) + 4 H(+)(out). Its function is as follows. NDH-1 shuttles electrons from NADH, via FMN and iron-sulfur (Fe-S) centers, to quinones in the respiratory chain. The immediate electron acceptor for the enzyme in this species is believed to be a menaquinone. Couples the redox reaction to proton translocation (for every two electrons transferred, four hydrogen ions are translocated across the cytoplasmic membrane), and thus conserves the redox energy in a proton gradient. This Deinococcus radiodurans (strain ATCC 13939 / DSM 20539 / JCM 16871 / CCUG 27074 / LMG 4051 / NBRC 15346 / NCIMB 9279 / VKM B-1422 / R1) protein is NADH-quinone oxidoreductase subunit N.